The sequence spans 389 residues: 8-amino-7-oxononanoate synthase (389 aa).

Residue R19 participates in substrate binding. Pyridoxal 5'-phosphate is bound at residue 106–107 (GY). Residue H131 participates in substrate binding. Residues S176, H204, and T233 each contribute to the pyridoxal 5'-phosphate site. K236 is subject to N6-(pyridoxal phosphate)lysine. T350 provides a ligand contact to substrate.

Belongs to the class-II pyridoxal-phosphate-dependent aminotransferase family. BioF subfamily. Homodimer. The cofactor is pyridoxal 5'-phosphate.

The catalysed reaction is 6-carboxyhexanoyl-[ACP] + L-alanine + H(+) = (8S)-8-amino-7-oxononanoate + holo-[ACP] + CO2. Its pathway is cofactor biosynthesis; biotin biosynthesis. Functionally, catalyzes the decarboxylative condensation of pimeloyl-[acyl-carrier protein] and L-alanine to produce 8-amino-7-oxononanoate (AON), [acyl-carrier protein], and carbon dioxide. This is 8-amino-7-oxononanoate synthase from Ectopseudomonas mendocina (strain ymp) (Pseudomonas mendocina).